We begin with the raw amino-acid sequence, 225 residues long: ATP-dependent Clp protease proteolytic subunit (225 aa).

Serine 123 acts as the Nucleophile in catalysis. Residue histidine 148 is part of the active site.

This sequence belongs to the peptidase S14 family. Fourteen ClpP subunits assemble into 2 heptameric rings which stack back to back to give a disk-like structure with a central cavity, resembling the structure of eukaryotic proteasomes.

It localises to the cytoplasm. The catalysed reaction is Hydrolysis of proteins to small peptides in the presence of ATP and magnesium. alpha-casein is the usual test substrate. In the absence of ATP, only oligopeptides shorter than five residues are hydrolyzed (such as succinyl-Leu-Tyr-|-NHMec, and Leu-Tyr-Leu-|-Tyr-Trp, in which cleavage of the -Tyr-|-Leu- and -Tyr-|-Trp bonds also occurs).. In terms of biological role, cleaves peptides in various proteins in a process that requires ATP hydrolysis. Has a chymotrypsin-like activity. Plays a major role in the degradation of misfolded proteins. The polypeptide is ATP-dependent Clp protease proteolytic subunit (Chlorobium phaeovibrioides (strain DSM 265 / 1930) (Prosthecochloris vibrioformis (strain DSM 265))).